Reading from the N-terminus, the 127-residue chain is Cystatin cpi-1 (127 aa).

The signal sequence occupies residues 1–19 (MFFPIVWLSVLLIISKSFA). The Secondary area of contact motif lies at 68–72 (QVVAG). An intrachain disulfide couples Cys86 to Cys98.

Belongs to the cystatin family.

In terms of biological role, cysteine protease inhibitor which inhibits members of the peptidase C1 family. Does not inhibit asparaginyl endopeptidase. The protein is Cystatin cpi-1 of Brugia malayi (Filarial nematode worm).